A 95-amino-acid chain; its full sequence is DNA-directed RNA polymerase subunit Rpo11 (95 aa).

This sequence belongs to the archaeal Rpo11/eukaryotic RPB11/RPC19 RNA polymerase subunit family. In terms of assembly, part of the RNA polymerase complex.

It localises to the cytoplasm. The enzyme catalyses RNA(n) + a ribonucleoside 5'-triphosphate = RNA(n+1) + diphosphate. In terms of biological role, DNA-dependent RNA polymerase (RNAP) catalyzes the transcription of DNA into RNA using the four ribonucleoside triphosphates as substrates. This chain is DNA-directed RNA polymerase subunit Rpo11, found in Pyrococcus furiosus (strain ATCC 43587 / DSM 3638 / JCM 8422 / Vc1).